Consider the following 270-residue polypeptide: uncharacterized protein (270 aa).

The protein belongs to the GSP E family.

This is an uncharacterized protein from Methanocaldococcus jannaschii (strain ATCC 43067 / DSM 2661 / JAL-1 / JCM 10045 / NBRC 100440) (Methanococcus jannaschii).